Here is a 580-residue protein sequence, read N- to C-terminus: MSERTFNWKNKDIRAQVDVVDSKLLPTLLLRNALVLNPYVKQWLKKNIWIYQDRIVYVGHELPNRAEEIHTIDCEGKYIVPGYIEPHAHPFQIYNPQTLAEYVSQYGTTTFVNDNLFLLLQSGKKKALTILNELKKQPVQYFWWSRYDLQTEVLNEDHVLPFDVRKQWIEHPDVIQGGEMTGWPRLVDGDDLMLHCMQATKKQRKRIEGHFPGASDKTLTKMKLFGADCDHEAMTGDEVMRRLELGYYVSLRNSSIRPDVRKILQELHEKGFRYYDHFFYTTDGATPNFYKGGMTNELIRIALEEGVPAIDAYNMASFNIAKYYQMDDYLGVVGPGRLASLNILEDPLNPNPVTVLSKGTILRENGCDLKAFTKTDWHKGGLVPLELSYDMTMDDLQFSMPMGVKMRNAVIMEPYMIEIDNSMEQLSFDHDESYLTMLDRHGKWRVNTMIKGFASSVQGFVSSFTTTGDIVAIGKNKADMLLAFARMKEIGGGIVLAENGNILHEIPLALCGCASSEAYEDVLEKEQKLRDLLTERGYEFCDPIYTLLFLQSTHLPYIRITPRGIFDVMKKTVLFPSIMR.

Ser-399 bears the Phosphoserine mark.

It belongs to the metallo-dependent hydrolases superfamily. Adenine deaminase family.

It carries out the reaction adenine + H2O + H(+) = hypoxanthine + NH4(+). The chain is Putative adenine deaminase YerA (yerA) from Bacillus subtilis (strain 168).